Reading from the N-terminus, the 493-residue chain is 3-octaprenyl-4-hydroxybenzoate carboxy-lyase (493 aa).

Residue N172 participates in Mn(2+) binding. Prenylated FMN contacts are provided by residues 175 to 177, 189 to 191, and 194 to 195; these read IYR, RWL, and RG. A Mn(2+)-binding site is contributed by E238. Catalysis depends on D287, which acts as the Proton donor.

The protein belongs to the UbiD family. As to quaternary structure, homohexamer. Prenylated FMN is required as a cofactor. It depends on Mn(2+) as a cofactor.

The protein resides in the cell membrane. The catalysed reaction is a 4-hydroxy-3-(all-trans-polyprenyl)benzoate + H(+) = a 2-(all-trans-polyprenyl)phenol + CO2. It functions in the pathway cofactor biosynthesis; ubiquinone biosynthesis. Catalyzes the decarboxylation of 3-octaprenyl-4-hydroxy benzoate to 2-octaprenylphenol, an intermediate step in ubiquinone biosynthesis. The chain is 3-octaprenyl-4-hydroxybenzoate carboxy-lyase from Shewanella sp. (strain MR-4).